We begin with the raw amino-acid sequence, 229 residues long: MIDTQQLRAEQLARASDVIRHDDLPFEQPAFIAGADVGFEQEGSVTRAAIAVMRYPSLELVEYKIARISTTMPYIPGFLSFRECPGLLAAWALLEQKPDLLFVDGHGISHPRRLGVASHFGLLVDVPTIGVAKSRLCGRFEPLTESVGSQQPLLDKGEQIGWVWRSKARCNPLFVATGHRVSQDSALHWVQSCMRGYRLPEPTRWADAVASNRPAFVRWQRQQAANVLS.

2 residues coordinate Mg(2+): aspartate 36 and aspartate 104.

It belongs to the endonuclease V family. Mg(2+) is required as a cofactor.

The protein localises to the cytoplasm. The enzyme catalyses Endonucleolytic cleavage at apurinic or apyrimidinic sites to products with a 5'-phosphate.. DNA repair enzyme involved in the repair of deaminated bases. Selectively cleaves double-stranded DNA at the second phosphodiester bond 3' to a deoxyinosine leaving behind the intact lesion on the nicked DNA. The polypeptide is Endonuclease V (Pectobacterium carotovorum subsp. carotovorum (strain PC1)).